The primary structure comprises 940 residues: Phagocyte signaling-impaired protein (940 aa).

A TPR repeat occupies 77 to 110 (STTLHVMTLCYKETDQLDKICQIFTSASKQLPGN).

It belongs to the MDM20/NAA25 family. Component of the N-terminal acetyltransferase B (NatB) complex.

Its subcellular location is the lysosome. Non-catalytic subunit of the NatB complex which catalyzes acetylation of the N-terminal methionine residues of proteins beginning with Met-Asp or Met-Glu. Has 2 roles in the larval immune response: required both for the phagocytic degradation of internalized bacteria and for the induction of Defensin in the fat body. Within the phagocytic blood cells, has a role in detection of infection and activation of the humoral immune response. The chain is Phagocyte signaling-impaired protein from Aedes aegypti (Yellowfever mosquito).